The sequence spans 456 residues: Asparagine--tRNA ligase (456 aa).

This sequence belongs to the class-II aminoacyl-tRNA synthetase family. Homodimer.

The protein resides in the cytoplasm. It catalyses the reaction tRNA(Asn) + L-asparagine + ATP = L-asparaginyl-tRNA(Asn) + AMP + diphosphate + H(+). This Mycoplasmoides gallisepticum (strain R(low / passage 15 / clone 2)) (Mycoplasma gallisepticum) protein is Asparagine--tRNA ligase.